Consider the following 423-residue polypeptide: Gamma-glutamyl phosphate reductase (423 aa).

The protein belongs to the gamma-glutamyl phosphate reductase family.

It is found in the cytoplasm. The catalysed reaction is L-glutamate 5-semialdehyde + phosphate + NADP(+) = L-glutamyl 5-phosphate + NADPH + H(+). It participates in amino-acid biosynthesis; L-proline biosynthesis; L-glutamate 5-semialdehyde from L-glutamate: step 2/2. Catalyzes the NADPH-dependent reduction of L-glutamate 5-phosphate into L-glutamate 5-semialdehyde and phosphate. The product spontaneously undergoes cyclization to form 1-pyrroline-5-carboxylate. The sequence is that of Gamma-glutamyl phosphate reductase from Brucella suis (strain ATCC 23445 / NCTC 10510).